Reading from the N-terminus, the 440-residue chain is Xaa-Pro dipeptidase (440 aa).

Residues aspartate 244, aspartate 255, histidine 335, glutamate 380, and glutamate 419 each contribute to the Mn(2+) site.

The protein belongs to the peptidase M24B family. Bacterial-type prolidase subfamily. It depends on Mn(2+) as a cofactor.

It carries out the reaction Xaa-L-Pro dipeptide + H2O = an L-alpha-amino acid + L-proline. Its function is as follows. Splits dipeptides with a prolyl residue in the C-terminal position. The chain is Xaa-Pro dipeptidase from Shewanella halifaxensis (strain HAW-EB4).